The sequence spans 454 residues: Tetrahydroanabasine acetyltransferase (454 aa).

Catalysis depends on proton acceptor residues H164 and D389.

This sequence belongs to the plant acyltransferase family. As to quaternary structure, monomer.

The enzyme catalyses tetrahydroanabasine + acetyl-CoA = ammodendrine + CoA. Its pathway is alkaloid biosynthesis. Functionally, tetrahydroanabasine acetyltransferase involved in the accumulation of quinolizidine type antinutritional alkaloids (QAs) natural products. QAs impart a bitter taste to plants, acting as repellents and toxicants for herbivores and predators, and possess a variety of pharmacological effects, including sedative, anticonvulsant, anti-inflammatory, antiviral, antitumor, antipyretic, anti-hepatitis B, antifibrotic, antiallergic, antidiarrheal, analgesic and antimicrobial activities. Mediates the conversion of tetrahydroanabasine into ammodendrine. The protein is Tetrahydroanabasine acetyltransferase of Lupinus albus (White lupine).